We begin with the raw amino-acid sequence, 340 residues long: Protein RecA (340 aa).

An ATP-binding site is contributed by 65-72 (GPESGGKT).

It belongs to the RecA family.

The protein localises to the cytoplasm. Its function is as follows. Can catalyze the hydrolysis of ATP in the presence of single-stranded DNA, the ATP-dependent uptake of single-stranded DNA by duplex DNA, and the ATP-dependent hybridization of homologous single-stranded DNAs. It interacts with LexA causing its activation and leading to its autocatalytic cleavage. The polypeptide is Protein RecA (Thermus thermophilus).